A 718-amino-acid polypeptide reads, in one-letter code: U-box domain-containing protein 5 (718 aa).

A U-box domain is found at 218–292; the sequence is TLPEKFKCTL…SEWCAKNGLD (75 aa). ARM repeat units follow at residues 493–532, 534–571, and 573–613; these read PHGP…NLSS, MEIC…NLCS, and EKGR…QLCV. Residues 662–704 are disordered; sequence KEEEEEVSSRPEGRTTASPTSQVVTPVTHPEPVKITPSPKKSG. Over residues 676 to 686 the composition is skewed to polar residues; it reads TTASPTSQVVT.

The enzyme catalyses S-ubiquitinyl-[E2 ubiquitin-conjugating enzyme]-L-cysteine + [acceptor protein]-L-lysine = [E2 ubiquitin-conjugating enzyme]-L-cysteine + N(6)-ubiquitinyl-[acceptor protein]-L-lysine.. The protein operates within protein modification; protein ubiquitination. In terms of biological role, functions as an E3 ubiquitin ligase. The polypeptide is U-box domain-containing protein 5 (PUB5) (Arabidopsis thaliana (Mouse-ear cress)).